The primary structure comprises 527 residues: Bifunctional purine biosynthesis protein PurH (527 aa).

The 149-residue stretch at methionine 1–threonine 149 folds into the MGS-like domain.

Belongs to the PurH family.

The enzyme catalyses (6R)-10-formyltetrahydrofolate + 5-amino-1-(5-phospho-beta-D-ribosyl)imidazole-4-carboxamide = 5-formamido-1-(5-phospho-D-ribosyl)imidazole-4-carboxamide + (6S)-5,6,7,8-tetrahydrofolate. The catalysed reaction is IMP + H2O = 5-formamido-1-(5-phospho-D-ribosyl)imidazole-4-carboxamide. Its pathway is purine metabolism; IMP biosynthesis via de novo pathway; 5-formamido-1-(5-phospho-D-ribosyl)imidazole-4-carboxamide from 5-amino-1-(5-phospho-D-ribosyl)imidazole-4-carboxamide (10-formyl THF route): step 1/1. The protein operates within purine metabolism; IMP biosynthesis via de novo pathway; IMP from 5-formamido-1-(5-phospho-D-ribosyl)imidazole-4-carboxamide: step 1/1. The chain is Bifunctional purine biosynthesis protein PurH from Xanthomonas euvesicatoria pv. vesicatoria (strain 85-10) (Xanthomonas campestris pv. vesicatoria).